The following is a 332-amino-acid chain: Cysteine and histidine-rich domain-containing protein 1 (332 aa).

Alanine 2 is subject to N-acetylalanine. An interaction with PPP5C region spans residues 2–77 (ALLCYNRGCG…KPPEPVKPEV (76 aa)). Zn(2+)-binding residues include cysteine 5, cysteine 10, cysteine 24, histidine 27, cysteine 42, and cysteine 43. CHORD domains follow at residues 5-64 (CYNR…KGRH) and 157-216 (CKNG…KGKH). Threonine 47 carries the post-translational modification Phosphothreonine. The residue at position 51 (serine 51) is a Phosphoserine. Zn(2+)-binding residues include cysteine 59, histidine 64, cysteine 157, cysteine 162, cysteine 176, histidine 179, cysteine 194, cysteine 195, cysteine 211, and histidine 216. An interaction with HSP90AA1 and HSP90AB1 region spans residues 65–316 (NSEKPPEPVK…AEPMQWASLE (252 aa)). Residues 227–316 (VVPCRHDWHQ…AEPMQWASLE (90 aa)) form the CS domain.

As to quaternary structure, interacts with HSP90AA1, ROCK1 and ROCK2. Interacts with HSP90AB1 and PPP5C. In terms of tissue distribution, underexpressed in many breast and lung cancers.

Functionally, regulates centrosome duplication, probably by inhibiting the kinase activity of ROCK2. Proposed to act as co-chaperone for HSP90. May play a role in the regulation of NOD1 via a HSP90 chaperone complex. In vitro, has intrinsic chaperone activity. This function may be achieved by inhibiting association of ROCK2 with NPM1. Plays a role in ensuring the localization of the tyrosine kinase receptor EGFR to the plasma membrane, and thus ensures the subsequent regulation of EGFR activity and EGF-induced actin cytoskeleton remodeling. Involved in stress response. Prevents tumorigenesis. This Homo sapiens (Human) protein is Cysteine and histidine-rich domain-containing protein 1 (CHORDC1).